Reading from the N-terminus, the 68-residue chain is MKNQFAILLLAVVFLQLISQSDAIWSAIWSGIKGLLGKRGLKNADRLDELFDGDISDADLDFLRELMR.

An N-terminal signal peptide occupies residues 1-23 (MKNQFAILLLAVVFLQLISQSDA). Leu-36 carries the post-translational modification Leucine amide. A propeptide spanning residues 40-68 (GLKNADRLDELFDGDISDADLDFLRELMR) is cleaved from the precursor.

It belongs to the non-disulfide-bridged peptide (NDBP) superfamily. Short antimicrobial peptide (group 4) family. As to expression, expressed by the venom gland.

Its subcellular location is the secreted. The protein resides in the target cell membrane. Functionally, antimicrobial peptide that inhibits the growth of Gram-positive (S.aureus, MIC=1 uM) and Gram-negative bacteria (E.coli, MIC=15 uM and P.aeruginosa, MIC=2 uM). It also shows 37% of hemolysis when 15 uM are tested (93% at 50 uM). The protein is Antimicrobial peptide UyCT5 of Urodacus yaschenkoi (Inland robust scorpion).